The chain runs to 263 residues: Urease accessory protein UreD 1 (263 aa).

Belongs to the UreD family. In terms of assembly, ureD, UreF and UreG form a complex that acts as a GTP-hydrolysis-dependent molecular chaperone, activating the urease apoprotein by helping to assemble the nickel containing metallocenter of UreC. The UreE protein probably delivers the nickel.

The protein localises to the cytoplasm. Required for maturation of urease via the functional incorporation of the urease nickel metallocenter. This is Urease accessory protein UreD 1 from Synechococcus sp. (strain JA-3-3Ab) (Cyanobacteria bacterium Yellowstone A-Prime).